The chain runs to 489 residues: Putative BTB/POZ domain-containing protein R773 (489 aa).

One can recognise a BTB domain in the interval 3–73 (SNIELVITDE…GNTSYKFQDK (71 aa)).

This sequence belongs to the mimivirus BTB/WD family.

In Acanthamoeba polyphaga (Amoeba), this protein is Putative BTB/POZ domain-containing protein R773.